A 316-amino-acid polypeptide reads, in one-letter code: Olfactory receptor 2AG1 (316 aa).

Over 1 to 25 the chain is Extracellular; it reads MELWNFTLGSGFILVGILNDSGSPE. N-linked (GlcNAc...) asparagine glycans are attached at residues asparagine 5 and asparagine 19. The helical transmembrane segment at 26–49 threads the bilayer; it reads LLCATITILYLLALISNGLLLLAI. The Cytoplasmic portion of the chain corresponds to 50–57; sequence TMEARLHM. Residues 58 to 79 traverse the membrane as a helical segment; it reads PMYLLLGQLSLMDLLFTSVVTP. The Extracellular portion of the chain corresponds to 80–100; the sequence is KALADFLRRENTISFGGCALQ. Cysteine 97 and cysteine 189 are joined by a disulfide. A helical membrane pass occupies residues 101–120; sequence MFLALTMGGAEDLLLAFMAY. Over 121–139 the chain is Cytoplasmic; sequence DRYVAICHPLTYMTLMSSR. Residues 140-158 form a helical membrane-spanning segment; sequence ACWLMVATSWILASLSALI. Residues 159-195 are Extracellular-facing; it reads YTVYTMHYPFCRAQEIRHLLCEIPHLLKVACADTSRY. A helical membrane pass occupies residues 196–219; it reads ELMVYVMGVTFLIPSLAAILASYT. The Cytoplasmic segment spans residues 220–236; the sequence is QILLTVLHMPSNEGRKK. Residues 237–259 traverse the membrane as a helical segment; that stretch reads ALVTCSSHLTVVGMFYGAATFMY. Residues 260–272 are Extracellular-facing; it reads VLPSSFHSTRQDN. The chain crosses the membrane as a helical span at residues 273-292; sequence IISVFYTIVTPALNPLIYSL. Residues 293–316 are Cytoplasmic-facing; the sequence is RNKEVMRALRRVLGKYMLPAHSTL.

The protein belongs to the G-protein coupled receptor 1 family.

The protein resides in the cell membrane. Functionally, odorant receptor. This chain is Olfactory receptor 2AG1 (OR2AG1), found in Homo sapiens (Human).